The primary structure comprises 507 residues: Cytochrome P450 7B1 (507 aa).

3 helical membrane passes run 14–34 (PLALLGLLFAATLLLSALFLL), 178–198 (IFAFCGSLVFEITFATLYGKI), and 287–307 (FLWASLANTIPAMFWAMYYIL). Cys447 lines the heme pocket.

It belongs to the cytochrome P450 family. It depends on heme as a cofactor. As to expression, highly expressed in brain structures including the corpus callosum, the anterior commissure and fornix. The hippocampal expression is particularly prominent in the dentate gyrus. Expressed in liver and kidney. The hepatic expression is sexually dimorphic, predominantly detected in male liver while barely detectable in females. Expressed in lymph nodes and spleens, in both lymphoid and stromal compartments. Higher expression is detected in fibroblastic reticular cells, a type of stromal cells in the lymph nodes. Also expressed at high levels in the outer follicle and at the B cell-T cell boundary of splenic germinal centers. Expressed in dendritic cells (DCs) subpopulations being most abundant in CD8-positive DCs.

Its subcellular location is the endoplasmic reticulum membrane. It is found in the microsome membrane. It carries out the reaction 25-hydroxycholesterol + reduced [NADPH--hemoprotein reductase] + O2 = 7alpha,25-dihydroxycholesterol + oxidized [NADPH--hemoprotein reductase] + H2O + H(+). The enzyme catalyses (25R)-cholest-5-ene-3beta,26-diol + reduced [NADPH--hemoprotein reductase] + O2 = (25R)-cholest-5-en-3beta,7alpha,26-triol + oxidized [NADPH--hemoprotein reductase] + H2O + H(+). It catalyses the reaction (24S)-hydroxycholesterol + reduced [NADPH--hemoprotein reductase] + O2 = (24S)-7alpha-dihydroxycholesterol + oxidized [NADPH--hemoprotein reductase] + H2O + H(+). The catalysed reaction is (24S)-25-epoxycholesterol + reduced [NADPH--hemoprotein reductase] + O2 = (24S,25)-epoxy-7alpha-hydroxycholesterol + oxidized [NADPH--hemoprotein reductase] + H2O + H(+). It carries out the reaction (22R)-hydroxycholesterol + reduced [NADPH--hemoprotein reductase] + O2 = (22R,7alpha)-dihydroxycholesterol + oxidized [NADPH--hemoprotein reductase] + H2O + H(+). The enzyme catalyses androst-5-en-3beta,17beta-diol + reduced [NADPH--hemoprotein reductase] + O2 = androst-5-en-3beta,7alpha,17beta-triol + oxidized [NADPH--hemoprotein reductase] + H2O + H(+). It catalyses the reaction 5alpha-androstane-3beta,17beta-diol + reduced [NADPH--hemoprotein reductase] + O2 = 5alpha-androstane-3beta,6alpha,17beta-triol + oxidized [NADPH--hemoprotein reductase] + H2O + H(+). The catalysed reaction is 3beta-hydroxyandrost-5-en-17-one + reduced [NADPH--hemoprotein reductase] + O2 = 3beta,7alpha-dihydroxyandrost-5-en-17-one + oxidized [NADPH--hemoprotein reductase] + H2O + H(+). It carries out the reaction 3beta-hydroxy-5alpha-androstan-17-one + reduced [NADPH--hemoprotein reductase] + O2 = 3beta,7alpha-dihydroxy-5alpha-androstan-17-one + oxidized [NADPH--hemoprotein reductase] + H2O + H(+). The enzyme catalyses pregnenolone + reduced [NADPH--hemoprotein reductase] + O2 = 7alpha-hydroxypregnenolone + oxidized [NADPH--hemoprotein reductase] + H2O + H(+). It participates in lipid metabolism; bile acid biosynthesis. It functions in the pathway steroid hormone biosynthesis. Its activity is regulated as follows. Inhibited by drugs voriconazole and metyrapone. Its function is as follows. A cytochrome P450 monooxygenase involved in the metabolism of endogenous oxysterols and steroid hormones, including neurosteroids. Mechanistically, uses molecular oxygen inserting one oxygen atom into a substrate, and reducing the second into a water molecule, with two electrons provided by NADPH via cytochrome P450 reductase (CPR; NADPH-ferrihemoprotein reductase). Catalyzes the hydroxylation of carbon hydrogen bonds of steroids with a preference for 7-alpha position. Usually metabolizes steroids carrying a hydroxy group at position 3, functioning as a 3-hydroxy steroid 7-alpha hydroxylase. Hydroxylates oxysterols, including 25-hydroxycholesterol and (25R)-cholest-5-ene-3beta,26-diol toward 7-alpha hydroxy derivatives, which may be transported to the liver and converted to bile acids. Via its product 7-alpha,25-dihydroxycholesterol, a ligand for the chemotactic G protein-coupled receptor GPR183/EBI2, regulates B cell migration in germinal centers of lymphoid organs, thus guiding efficient maturation of plasma B cells and overall antigen-specific humoral immune response. 7-alpha hydroxylates neurosteroids, including 3beta-hydroxyandrost-5-en-17-one (dehydroepiandrosterone) and pregnenolone, both involved in hippocampus-associated memory and learning. Metabolizes androstanoids toward 6- or 7-alpha hydroxy derivatives. In Mus musculus (Mouse), this protein is Cytochrome P450 7B1.